Here is a 377-residue protein sequence, read N- to C-terminus: UPF0425 pyridoxal phosphate-dependent protein MTH_1914 (377 aa).

The residue at position 207 (K207) is an N6-(pyridoxal phosphate)lysine.

It belongs to the UPF0425 family. Requires pyridoxal 5'-phosphate as cofactor.

The protein is UPF0425 pyridoxal phosphate-dependent protein MTH_1914 of Methanothermobacter thermautotrophicus (strain ATCC 29096 / DSM 1053 / JCM 10044 / NBRC 100330 / Delta H) (Methanobacterium thermoautotrophicum).